The chain runs to 301 residues: Transposase InsD for insertion element IS2D (301 aa).

The 184-residue stretch at 106–289 folds into the Integrase catalytic domain; it reads KPAVPPSKRA…SPREYLRQRA (184 aa).

Functionally, involved in the transposition of the insertion sequence IS2. The sequence is that of Transposase InsD for insertion element IS2D (insD2) from Escherichia coli (strain K12).